Reading from the N-terminus, the 719-residue chain is Phosphoribosylformylglycinamidine synthase subunit PurL (719 aa).

Histidine 47 is an active-site residue. Residues tyrosine 50 and lysine 89 each contribute to the ATP site. Glutamate 91 lines the Mg(2+) pocket. Residues 92–95 (SHNH) and arginine 114 each bind substrate. The active-site Proton acceptor is histidine 93. Aspartate 115 serves as a coordination point for Mg(2+). Residue glutamine 238 coordinates substrate. Aspartate 266 contacts Mg(2+). 310–312 (ESQ) is a binding site for substrate. The ATP site is built by aspartate 488 and glycine 525. Residue asparagine 526 coordinates Mg(2+). Serine 528 is a binding site for substrate.

Belongs to the FGAMS family. In terms of assembly, monomer. Part of the FGAM synthase complex composed of 1 PurL, 1 PurQ and 2 PurS subunits.

Its subcellular location is the cytoplasm. The enzyme catalyses N(2)-formyl-N(1)-(5-phospho-beta-D-ribosyl)glycinamide + L-glutamine + ATP + H2O = 2-formamido-N(1)-(5-O-phospho-beta-D-ribosyl)acetamidine + L-glutamate + ADP + phosphate + H(+). Its pathway is purine metabolism; IMP biosynthesis via de novo pathway; 5-amino-1-(5-phospho-D-ribosyl)imidazole from N(2)-formyl-N(1)-(5-phospho-D-ribosyl)glycinamide: step 1/2. Functionally, part of the phosphoribosylformylglycinamidine synthase complex involved in the purines biosynthetic pathway. Catalyzes the ATP-dependent conversion of formylglycinamide ribonucleotide (FGAR) and glutamine to yield formylglycinamidine ribonucleotide (FGAM) and glutamate. The FGAM synthase complex is composed of three subunits. PurQ produces an ammonia molecule by converting glutamine to glutamate. PurL transfers the ammonia molecule to FGAR to form FGAM in an ATP-dependent manner. PurS interacts with PurQ and PurL and is thought to assist in the transfer of the ammonia molecule from PurQ to PurL. The polypeptide is Phosphoribosylformylglycinamidine synthase subunit PurL (Ruegeria pomeroyi (strain ATCC 700808 / DSM 15171 / DSS-3) (Silicibacter pomeroyi)).